We begin with the raw amino-acid sequence, 170 residues long: Thialysine N-epsilon-acetyltransferase (170 aa).

The region spanning Val-4–Ala-168 is the N-acetyltransferase domain. Substrate is bound at residue Phe-27 to Glu-28. N6-acetyllysine is present on Lys-29. Glu-92 lines the substrate pocket. Acetyl-CoA-binding positions include Ile-94 to Val-96, Gly-102 to Ser-107, Asn-133 to Arg-135, and Tyr-140. The active-site Proton donor is the Tyr-140. Residue Glu-152 coordinates substrate.

This sequence belongs to the acetyltransferase family. As to quaternary structure, homodimer. In terms of tissue distribution, widely expressed. Under physiological conditions, SSAT2 is expressed at lower level that SSAT1 (SSAT). Many tissues express only SSAT1, several tissues express both SSAT1 and SSAT2, and bone, cervix, ovary and pineal gland expressed only SSAT2.

It localises to the cytoplasm. The enzyme catalyses S-(2-aminoethyl)-L-cysteine + acetyl-CoA = S-(2-acetamidoethyl)-L-cysteine + CoA + H(+). It catalyses the reaction an alkane-alpha,omega-diamine + acetyl-CoA = an N-acetylalkane-alpha,omega-diamine + CoA + H(+). Catalyzes the N-acetylation of the amino acid thialysine (S-(2-aminoethyl)-L-cysteine), a L-lysine analog with the 4-methylene group substituted with a sulfur. May also catalyze acetylation of polyamines, such as norspermidine, spermidine or spermine. However, ability to acetylate polyamines is weak, suggesting that it does not act as a diamine acetyltransferase in vivo. The protein is Thialysine N-epsilon-acetyltransferase of Homo sapiens (Human).